The primary structure comprises 488 residues: GTPase Der (488 aa).

EngA-type G domains lie at proline 3–methionine 166 and isoleucine 200–threonine 373. Residues glycine 9–serine 16, aspartate 56–isoleucine 60, asparagine 118–aspartate 121, glycine 206–serine 213, aspartate 253–valine 257, and asparagine 318–aspartate 321 each bind GTP. A KH-like domain is found at arginine 374 to aspartate 458.

The protein belongs to the TRAFAC class TrmE-Era-EngA-EngB-Septin-like GTPase superfamily. EngA (Der) GTPase family. Associates with the 50S ribosomal subunit.

Its function is as follows. GTPase that plays an essential role in the late steps of ribosome biogenesis. The sequence is that of GTPase Der from Shewanella amazonensis (strain ATCC BAA-1098 / SB2B).